We begin with the raw amino-acid sequence, 343 residues long: Heat-inducible transcription repressor HrcA (343 aa).

The protein belongs to the HrcA family.

Its function is as follows. Negative regulator of class I heat shock genes (grpE-dnaK-dnaJ and groELS operons). Prevents heat-shock induction of these operons. The protein is Heat-inducible transcription repressor HrcA of Thermobifida fusca (strain YX).